Consider the following 128-residue polypeptide: Ribonuclease P protein component (128 aa).

It belongs to the RnpA family. Consists of a catalytic RNA component (M1 or rnpB) and a protein subunit.

It carries out the reaction Endonucleolytic cleavage of RNA, removing 5'-extranucleotides from tRNA precursor.. In terms of biological role, RNaseP catalyzes the removal of the 5'-leader sequence from pre-tRNA to produce the mature 5'-terminus. It can also cleave other RNA substrates such as 4.5S RNA. The protein component plays an auxiliary but essential role in vivo by binding to the 5'-leader sequence and broadening the substrate specificity of the ribozyme. The sequence is that of Ribonuclease P protein component from Prochlorococcus marinus (strain MIT 9303).